Consider the following 466-residue polypeptide: Teichoic acids export ATP-binding protein TagH (466 aa).

An ABC transporter domain is found at asparagine 27 to lysine 249. ATP is bound at residue glycine 63–serine 70. The segment at leucine 250–glutamine 466 is unknown. Disordered regions lie at residues asparagine 356–asparagine 403 and isoleucine 439–glutamine 466. Positions proline 373–threonine 384 are enriched in basic residues. The segment covering lysine 385–asparagine 403 has biased composition (low complexity). In terms of domain architecture, LysM spans asparagine 403–leucine 447. Over residues glutamate 449 to glutamine 466 the composition is skewed to polar residues.

The protein belongs to the ABC transporter superfamily. Teichoic acids exporter (TC 3.A.1.104.1) family. The complex is composed of two ATP-binding proteins (TagH) and two transmembrane proteins (TagG).

Its subcellular location is the cell membrane. The enzyme catalyses ATP + H2O + teichoic acidSide 1 = ADP + phosphate + teichoic acidSide 2.. Part of the ABC transporter complex TagGH involved in teichoic acids export. Responsible for energy coupling to the transport system. The polypeptide is Teichoic acids export ATP-binding protein TagH (Lactococcus lactis subsp. lactis (strain IL1403) (Streptococcus lactis)).